The following is an 846-amino-acid chain: Translation initiation factor IF-2 (846 aa).

The segment at 94-263 (QRSPEEIQAE…HGFQNPTGPV (170 aa)) is disordered. Residues 96-135 (SPEEIQAEQKRELDERRAAENAARDKVEAEVRQRNEEQAR) show a composition bias toward basic and acidic residues. Composition is skewed to low complexity over residues 136–148 (RQAAGSAAAAPAP) and 158–176 (AAPVAAPAPVVADAPASED). Composition is skewed to basic and acidic residues over residues 177–206 (AAARAAERKKDETRRNESRTRDDDRRRGEA) and 230–239 (TTDEESDGAR). Basic residues predominate over residues 240–253 (RGRGGKSKLKKRNQ). The tr-type G domain maps to 346 to 513 (SRAPVVTVMG…AVLLQAEILE (168 aa)). Residues 355-362 (GHVDHGKT) form a G1 region. 355–362 (GHVDHGKT) serves as a coordination point for GTP. The interval 380 to 384 (GITQH) is G2. A G3 region spans residues 401–404 (DTPG). GTP-binding positions include 401-405 (DTPGH) and 455-458 (NKID). Residues 455-458 (NKID) are G4. Residues 491-493 (SAK) form a G5 region.

Belongs to the TRAFAC class translation factor GTPase superfamily. Classic translation factor GTPase family. IF-2 subfamily.

Its subcellular location is the cytoplasm. In terms of biological role, one of the essential components for the initiation of protein synthesis. Protects formylmethionyl-tRNA from spontaneous hydrolysis and promotes its binding to the 30S ribosomal subunits. Also involved in the hydrolysis of GTP during the formation of the 70S ribosomal complex. This is Translation initiation factor IF-2 from Pseudomonas putida (strain ATCC 47054 / DSM 6125 / CFBP 8728 / NCIMB 11950 / KT2440).